The chain runs to 194 residues: Peptidyl-tRNA hydrolase (194 aa).

TRNA is bound at residue Y17. The active-site Proton acceptor is H22. 3 residues coordinate tRNA: Y68, N70, and N116.

Belongs to the PTH family. As to quaternary structure, monomer.

Its subcellular location is the cytoplasm. It catalyses the reaction an N-acyl-L-alpha-aminoacyl-tRNA + H2O = an N-acyl-L-amino acid + a tRNA + H(+). In terms of biological role, hydrolyzes ribosome-free peptidyl-tRNAs (with 1 or more amino acids incorporated), which drop off the ribosome during protein synthesis, or as a result of ribosome stalling. Functionally, catalyzes the release of premature peptidyl moieties from peptidyl-tRNA molecules trapped in stalled 50S ribosomal subunits, and thus maintains levels of free tRNAs and 50S ribosomes. In Pseudomonas entomophila (strain L48), this protein is Peptidyl-tRNA hydrolase.